Reading from the N-terminus, the 311-residue chain is Dihydroorotate dehydrogenase B (NAD(+)), catalytic subunit (311 aa).

Substrate-binding positions include K52, 76–80 (NAMGL), and N133. Residue 52-53 (KS) participates in FMN binding. N133 serves as a coordination point for FMN. The Nucleophile role is filled by C136. 2 residues coordinate FMN: K171 and I197. A substrate-binding site is contributed by 198–199 (NT). Residues G223, 249-250 (GG), and 271-272 (GS) contribute to the FMN site.

The protein belongs to the dihydroorotate dehydrogenase family. Type 1 subfamily. In terms of assembly, heterotetramer of 2 PyrK and 2 PyrD type B subunits. FMN serves as cofactor.

The protein localises to the cytoplasm. The enzyme catalyses (S)-dihydroorotate + NAD(+) = orotate + NADH + H(+). Its pathway is pyrimidine metabolism; UMP biosynthesis via de novo pathway; orotate from (S)-dihydroorotate (NAD(+) route): step 1/1. Its function is as follows. Catalyzes the conversion of dihydroorotate to orotate with NAD(+) as electron acceptor. In Methanosarcina acetivorans (strain ATCC 35395 / DSM 2834 / JCM 12185 / C2A), this protein is Dihydroorotate dehydrogenase B (NAD(+)), catalytic subunit (pyrD).